The sequence spans 469 residues: Argininosuccinate lyase (469 aa).

Belongs to the lyase 1 family. Argininosuccinate lyase subfamily.

It localises to the cytoplasm. It catalyses the reaction 2-(N(omega)-L-arginino)succinate = fumarate + L-arginine. The protein operates within amino-acid biosynthesis; L-arginine biosynthesis; L-arginine from L-ornithine and carbamoyl phosphate: step 3/3. The polypeptide is Argininosuccinate lyase (Paracoccus denitrificans (strain Pd 1222)).